The sequence spans 495 residues: UDP-N-acetylmuramate--L-alanine ligase (495 aa).

Position 120 to 126 (120 to 126) interacts with ATP; it reads GSHGKTT.

The protein belongs to the MurCDEF family.

It localises to the cytoplasm. The catalysed reaction is UDP-N-acetyl-alpha-D-muramate + L-alanine + ATP = UDP-N-acetyl-alpha-D-muramoyl-L-alanine + ADP + phosphate + H(+). It participates in cell wall biogenesis; peptidoglycan biosynthesis. Functionally, cell wall formation. This Rickettsia prowazekii (strain Madrid E) protein is UDP-N-acetylmuramate--L-alanine ligase.